The sequence spans 610 residues: MPSALAFVLLVLNISLLKGQSPPGKPEIHKCRSPDKETFTCWWNPGTDGGLPTNYSLTYSKEGEKTTYECPDYKTSGPNSCFFSKQYTSIWKIYIITVNATNQMGSSSSDPLYVDVTYIVEPEPPRNLTLEVKQLKDKKTYLWVKWSPPTITDVKTGWFTMEYEIRLKPEEAEEWEIHFTGHQTQFKVFDLYPGQKYLVQTRCKPDHGYWSRWSQESSVEMPNDFTLKDTTVWIIVAILSAVICLIMVWAVALKGYSMMTCIFPPVPGPKIKGFDTHLLEKGKSEELLSALGCQDFPPTSDCEDLLVEFLEVDDNEDERLMPSHSKEYPGQGVKPTHLDPDSDSGHGSYDSHSLLSEKCEEPQAYPPTLHIPEITEKPENPEANIPPTVDPQSTNPNFHVDAPKSSTWPLLPGQHMPRSPYHSVADVCKLAGSPVNTLDSFLDKAEENVLKLSKALETGEEEVAEQKGAKSFPSDKQNTPWPLLQEKSPTVYVKPPDYVEIHKVNKDGVLSLFPKQRENNQTEKPGVPETSKEYAKVSGITDNNILVLVPDSRAQNTALLEESAKKAPPSFEADQSEKDLASFTATSSNRRLQLGRLDYLDPTCFMHSFH.

Residues 1–19 (MPSALAFVLLVLNISLLKG) form the signal peptide. Topologically, residues 20-229 (QSPPGKPEIH…EMPNDFTLKD (210 aa)) are extracellular. Fibronectin type-III domains lie at 22–122 (PPGK…IVEP) and 124–224 (PPRN…MPND). A disulfide bridge connects residues Cys-31 and Cys-41. An N-linked (GlcNAc...) asparagine glycan is attached at Asn-54. Cys-70 and Cys-81 form a disulfide bridge. N-linked (GlcNAc...) asparagine glycosylation is found at Asn-99 and Asn-127. Zn(2+)-binding residues include Asp-206 and His-207. The short motif at 210 to 214 (WSRWS) is the WSXWS motif element. A helical membrane pass occupies residues 230–253 (TTVWIIVAILSAVICLIMVWAVAL). Residues 254-610 (KGYSMMTCIF…DPTCFMHSFH (357 aa)) lie on the Cytoplasmic side of the membrane. Positions 262–270 (IFPPVPGPK) match the Box 1 motif motif. Disordered regions lie at residues 317 to 355 (DERL…HSLL), 458 to 482 (TGEE…TPWP), and 564 to 584 (AKKA…ASFT). The segment covering 318–327 (ERLMPSHSKE) has biased composition (basic and acidic residues). The segment covering 345-354 (GHGSYDSHSL) has biased composition (low complexity).

Belongs to the type I cytokine receptor family. Type 1 subfamily. As to quaternary structure, interacts with SMARCA1. Interacts with NEK3 and VAV2 and this interaction is prolactin-dependent.

Its subcellular location is the membrane. This is a receptor for the anterior pituitary hormone prolactin. In Rattus norvegicus (Rat), this protein is Prolactin receptor (Prlr).